Consider the following 80-residue polypeptide: Exodeoxyribonuclease 7 small subunit (80 aa).

It belongs to the XseB family. Heterooligomer composed of large and small subunits.

It localises to the cytoplasm. The catalysed reaction is Exonucleolytic cleavage in either 5'- to 3'- or 3'- to 5'-direction to yield nucleoside 5'-phosphates.. Functionally, bidirectionally degrades single-stranded DNA into large acid-insoluble oligonucleotides, which are then degraded further into small acid-soluble oligonucleotides. The polypeptide is Exodeoxyribonuclease 7 small subunit (Caulobacter sp. (strain K31)).